A 261-amino-acid polypeptide reads, in one-letter code: Putative hydro-lyase Sfum_3393 (261 aa).

This sequence belongs to the D-glutamate cyclase family.

This Syntrophobacter fumaroxidans (strain DSM 10017 / MPOB) protein is Putative hydro-lyase Sfum_3393.